Reading from the N-terminus, the 360-residue chain is MSQERPTFYRQELNKTVWEVPERYQNLSPVGSGAYGSVCAAFDTKTGHRVAVKKLSRPFQSIIHAKRTYRELRLLKHMKHENVIGLLDVFTPARSLEEFNDVYLVTHLMGADLNNIVKCQKLTDDHVQFLIYQILRGLKYIHSADIIHRDLKPSNLAVNEDCELKILDFGLARHTDDEMTGYVATRWYRAPEIMLNWMHYNQTVDIWSVGCIMAELLTGRTLFPGTDHIDQLKLILRLVGTPGAELLKKISSESARNYIQSLAQMPKMNFANVFIGANPLAVDLLEKMLVLDSDKRITAAQALAHAYFAQYHDPDDEPVAEPYDQSFESRDFLIDEWKSLTYDEVISFVPPPLDQEEMES.

Serine 2 is modified (N-acetylserine). The residue at position 2 (serine 2) is a Phosphoserine. Residue threonine 16 is modified to Phosphothreonine. A Protein kinase domain is found at 24 to 308 (YQNLSPVGSG…AAQALAHAYF (285 aa)). ATP contacts are provided by residues 30 to 38 (VGSGAYGSV) and lysine 53. Lysine 53 is subject to N6-acetyllysine. Aspartate 150 functions as the Proton acceptor in the catalytic mechanism. Position 152 is an N6-acetyllysine (lysine 152). At threonine 180 the chain carries Phosphothreonine. The TXY motif lies at 180 to 182 (TGY). Position 182 is a phosphotyrosine (tyrosine 182). Residue tyrosine 323 is modified to Phosphotyrosine; by ZAP70.

The protein belongs to the protein kinase superfamily. CMGC Ser/Thr protein kinase family. MAP kinase subfamily. As to quaternary structure, component of a signaling complex containing at least AKAP13, PKN1, MAPK14, ZAK and MAP2K3. Within this complex, AKAP13 interacts directly with PKN1, which in turn recruits MAPK14, MAP2K3 and ZAK. Binds to a kinase interaction motif within the protein tyrosine phosphatase, PTPRR. This interaction retains MAPK14 in the cytoplasm and prevents nuclear accumulation. Interacts with SPAG9 and GADD45A. Interacts with CDC25B, CDC25C, DUSP1, DUSP10, DUSP16, NP60, SUPT20H and TAB1. Interacts with casein kinase II subunits CSNK2A1 and CSNK2B. Interacts with PPM1D. Interacts with CDK5RAP3; recruits PPM1D to MAPK14 and may regulate its dephosphorylation. Interacts with DUSP2; this interaction does not lead to catalytic activation of DUSP2 and dephosphrylation of MAPK14. The cofactor is Mg(2+). In terms of processing, dually phosphorylated on Thr-180 and Tyr-182 by the MAP2Ks MAP2K3/MKK3, MAP2K4/MKK4 and MAP2K6/MKK6 in response to inflammatory cytokines, environmental stress or growth factors, which activates the enzyme. Dual phosphorylation can also be mediated by TAB1-mediated autophosphorylation. TCR engagement in T-cells also leads to Tyr-323 phosphorylation by ZAP70. Dephosphorylated and inactivated by DUPS1, DUSP10 and DUSP16. PPM1D also mediates dephosphorylation and inactivation of MAPK14. Post-translationally, acetylated at Lys-53 and Lys-152 by KAT2B and EP300. Acetylation at Lys-53 increases the affinity for ATP and enhances kinase activity. Lys-53 and Lys-152 are deacetylated by HDAC3. Ubiquitinated. Ubiquitination leads to degradation by the proteasome pathway.

The protein localises to the cytoplasm. Its subcellular location is the nucleus. It carries out the reaction L-seryl-[protein] + ATP = O-phospho-L-seryl-[protein] + ADP + H(+). The catalysed reaction is L-threonyl-[protein] + ATP = O-phospho-L-threonyl-[protein] + ADP + H(+). Activated by cell stresses such as DNA damage, heat shock, osmotic shock, anisomycin and sodium arsenite, as well as pro-inflammatory stimuli such as bacterial lipopolysaccharide (LPS) and interleukin-1. Activation occurs through dual phosphorylation of Thr-180 and Tyr-182 by either of two dual specificity kinases, MAP2K3/MKK3 or MAP2K6/MKK6, and potentially also MAP2K4/MKK4, as well as by TAB1-mediated autophosphorylation. MAPK14 phosphorylated on both Thr-180 and Tyr-182 is 10-20-fold more active than MAPK14 phosphorylated only on Thr-180, whereas MAPK14 phosphorylated on Tyr-182 alone is inactive. whereas Thr-180 is necessary for catalysis, Tyr-182 may be required for auto-activation and substrate recognition. Phosphorylated at Tyr-323 by ZAP70 in an alternative activation pathway in response to TCR signaling in T-cells. This alternative pathway is inhibited by GADD45A. Inhibited by dual specificity phosphatases, such as DUSP1, DUSP10, and DUSP16. Specifically inhibited by the binding of pyridinyl-imidazole compounds, which are cytokine-suppressive anti-inflammatory drugs (CSAID). SB203580 is an inhibitor of MAPK14. Functionally, serine/threonine kinase which acts as an essential component of the MAP kinase signal transduction pathway. MAPK14 is one of the four p38 MAPKs which play an important role in the cascades of cellular responses evoked by extracellular stimuli such as pro-inflammatory cytokines or physical stress leading to direct activation of transcription factors. Accordingly, p38 MAPKs phosphorylate a broad range of proteins and it has been estimated that they may have approximately 200 to 300 substrates each. Some of the targets are downstream kinases which are activated through phosphorylation and further phosphorylate additional targets. RPS6KA5/MSK1 and RPS6KA4/MSK2 can directly phosphorylate and activate transcription factors such as CREB1, ATF1, the NF-kappa-B isoform RELA/NFKB3, STAT1 and STAT3, but can also phosphorylate histone H3 and the nucleosomal protein HMGN1. RPS6KA5/MSK1 and RPS6KA4/MSK2 play important roles in the rapid induction of immediate-early genes in response to stress or mitogenic stimuli, either by inducing chromatin remodeling or by recruiting the transcription machinery. On the other hand, two other kinase targets, MAPKAPK2/MK2 and MAPKAPK3/MK3, participate in the control of gene expression mostly at the post-transcriptional level, by phosphorylating ZFP36 (tristetraprolin) and ELAVL1, and by regulating EEF2K, which is important for the elongation of mRNA during translation. MKNK1/MNK1 and MKNK2/MNK2, two other kinases activated by p38 MAPKs, regulate protein synthesis by phosphorylating the initiation factor EIF4E2. MAPK14 also interacts with casein kinase II, leading to its activation through autophosphorylation and further phosphorylation of TP53/p53. In the cytoplasm, the p38 MAPK pathway is an important regulator of protein turnover. For example, CFLAR is an inhibitor of TNF-induced apoptosis whose proteasome-mediated degradation is regulated by p38 MAPK phosphorylation. In a similar way, MAPK14 phosphorylates the ubiquitin ligase SIAH2, regulating its activity towards EGLN3. MAPK14 may also inhibit the lysosomal degradation pathway of autophagy by interfering with the intracellular trafficking of the transmembrane protein ATG9. Another function of MAPK14 is to regulate the endocytosis of membrane receptors by different mechanisms that impinge on the small GTPase RAB5A. In addition, clathrin-mediated EGFR internalization induced by inflammatory cytokines and UV irradiation depends on MAPK14-mediated phosphorylation of EGFR itself as well as of RAB5A effectors. Ectodomain shedding of transmembrane proteins is regulated by p38 MAPKs as well. In response to inflammatory stimuli, p38 MAPKs phosphorylate the membrane-associated metalloprotease ADAM17. Such phosphorylation is required for ADAM17-mediated ectodomain shedding of TGF-alpha family ligands, which results in the activation of EGFR signaling and cell proliferation. Another p38 MAPK substrate is FGFR1. FGFR1 can be translocated from the extracellular space into the cytosol and nucleus of target cells, and regulates processes such as rRNA synthesis and cell growth. FGFR1 translocation requires p38 MAPK activation. In the nucleus, many transcription factors are phosphorylated and activated by p38 MAPKs in response to different stimuli. Classical examples include ATF1, ATF2, ATF6, ELK1, PTPRH, DDIT3, TP53/p53 and MEF2C and MEF2A. The p38 MAPKs are emerging as important modulators of gene expression by regulating chromatin modifiers and remodelers. The promoters of several genes involved in the inflammatory response, such as IL6, IL8 and IL12B, display a p38 MAPK-dependent enrichment of histone H3 phosphorylation on 'Ser-10' (H3S10ph) in LPS-stimulated myeloid cells. This phosphorylation enhances the accessibility of the cryptic NF-kappa-B-binding sites marking promoters for increased NF-kappa-B recruitment. Phosphorylates CDC25B and CDC25C which is required for binding to 14-3-3 proteins and leads to initiation of a G2 delay after ultraviolet radiation. Phosphorylates TIAR following DNA damage, releasing TIAR from GADD45A mRNA and preventing mRNA degradation. The p38 MAPKs may also have kinase-independent roles, which are thought to be due to the binding to targets in the absence of phosphorylation. Protein O-Glc-N-acylation catalyzed by the OGT is regulated by MAPK14, and, although OGT does not seem to be phosphorylated by MAPK14, their interaction increases upon MAPK14 activation induced by glucose deprivation. This interaction may regulate OGT activity by recruiting it to specific targets such as neurofilament H, stimulating its O-Glc-N-acylation. Required in mid-fetal development for the growth of embryo-derived blood vessels in the labyrinth layer of the placenta. Also plays an essential role in developmental and stress-induced erythropoiesis, through regulation of EPO gene expression. Phosphorylates S100A9 at 'Thr-113'. The chain is Mitogen-activated protein kinase 14 from Rattus norvegicus (Rat).